Here is a 415-residue protein sequence, read N- to C-terminus: Calreticulin (415 aa).

The signal sequence occupies residues 1–20; that stretch reads MANPKSLSLFLLSLLAIASA. N-linked (GlcNAc...) asparagine glycosylation occurs at Asn-52. A disulfide bridge connects residues Cys-106 and Cys-138. Residues Tyr-110, Lys-112, Tyr-129, and Asp-136 each contribute to the an alpha-D-glucoside site. The N-linked (GlcNAc...) asparagine glycan is linked to Asn-152. Tandem repeats lie at residues 192–203, 211–222, 228–239, 246–257, 261–271, 275–285, and 289–299. Positions 192-257 are 4 X approximate repeats; the sequence is KQTGSLYTDW…DAKKPEDWDD (66 aa). The span at 208–253 shows a compositional bias: basic and acidic residues; it reads KIKDPEAKKPEDWDEKEYIPDPEDKKPEGYDDIPKEIPDPDAKKPE. Residues 208–276 form a disordered region; it reads KIKDPEAKKP…TIANPEYKGP (69 aa). The segment at 261 to 299 is 3 X approximate repeats; sequence GEWTAPTIANPEYKGPWKPKKIKNPNYKGKWKAPMIDNP. Glu-319 contacts an alpha-D-glucoside. Residues 347 to 376 are compositionally biased toward basic and acidic residues; sequence ETWGKNKDAEKAAFEEAEKKKEEEESKDDP. The tract at residues 347 to 415 is disordered; sequence ETWGKNKDAE…DSAEDVHDEL (69 aa). 2 stretches are compositionally biased toward acidic residues: residues 377-397 and 404-415; these read ADSDADEDDDDADDTEGEDDG and AEDSAEDVHDEL. A Prevents secretion from ER motif is present at residues 412–415; the sequence is HDEL.

This sequence belongs to the calreticulin family.

Its subcellular location is the endoplasmic reticulum lumen. Functionally, molecular calcium-binding chaperone promoting folding, oligomeric assembly and quality control in the ER via the calreticulin/calnexin cycle. This lectin may interact transiently with almost all of the monoglucosylated glycoproteins that are synthesized in the ER. This is Calreticulin from Ricinus communis (Castor bean).